A 72-amino-acid polypeptide reads, in one-letter code: uncharacterized protein (72 aa).

It belongs to the asfivirus I73R family.

It is found in the virion. This is an uncharacterized protein from Ornithodoros (relapsing fever ticks).